Here is a 208-residue protein sequence, read N- to C-terminus: MRDIDSVMRLAPVMPVLVIEDIADAKPIAEALVAGGLNVLEVTLRTPCALEAIKIMKEVPGAVVGAGTVLNAKMLDQAQEAGCEFFVSPGLTADLGKHAVAQKAALLPGVANAADVMLGLDLGLDRFKFFPAENIGGLPALKSMASVFRQVRFCPTGGITPTSAPKYLENPSILCVGGSWVVPAGKPDVAKITALAKEASAFKRAAVA.

The active-site Proton acceptor is E41. R45, T68, and K128 together coordinate pyruvate. K128 acts as the Schiff-base intermediate with substrate in catalysis.

This sequence belongs to the KHG/KDPG aldolase family. As to quaternary structure, homotrimer.

It is found in the cytoplasm. It catalyses the reaction 2-dehydro-3-deoxy-6-phospho-D-gluconate = D-glyceraldehyde 3-phosphate + pyruvate. It participates in carbohydrate acid metabolism; 2-dehydro-3-deoxy-D-gluconate degradation; D-glyceraldehyde 3-phosphate and pyruvate from 2-dehydro-3-deoxy-D-gluconate: step 2/2. Its function is as follows. Involved in the degradation of glucose via the Entner-Doudoroff pathway. Catalyzes the reversible, stereospecific retro-aldol cleavage of 2-keto-3-deoxy-6-phosphogluconate (KDPG) to pyruvate and D-glyceraldehyde-3-phosphate. The polypeptide is 2-dehydro-3-deoxy-phosphogluconate aldolase (Zymomonas mobilis subsp. mobilis (strain ATCC 31821 / ZM4 / CP4)).